The sequence spans 183 residues: DNA-directed RNA polymerase subunit Rpo7 (183 aa).

The S1 motif domain maps to histidine 82 to lysine 164.

This sequence belongs to the eukaryotic RPB7/RPC8 RNA polymerase subunit family. Part of the 13-subunit RNA polymerase complex. Forms a stalk with Rpo4 that extends from the main structure.

Its subcellular location is the cytoplasm. It carries out the reaction RNA(n) + a ribonucleoside 5'-triphosphate = RNA(n+1) + diphosphate. DNA-dependent RNA polymerase (RNAP) catalyzes the transcription of DNA into RNA using the four ribonucleoside triphosphates as substrates. Its function is as follows. Reconstitution experiments show this subunit is required for basic activity. The protein is DNA-directed RNA polymerase subunit Rpo7 of Sulfolobus acidocaldarius (strain ATCC 33909 / DSM 639 / JCM 8929 / NBRC 15157 / NCIMB 11770).